Here is a 431-residue protein sequence, read N- to C-terminus: MSTIIDVYAREVLDSRGNPTVEVEVYTESGAFGRAIVPSGASTGEHEAVELRDGDKSRYLGKGVVNAVNNVNEIIAPEIAGFDVTDQAGIDRAMIELDGTPNKGKLGANAILGVSMAVAHAAADFVGLPLYRYLGGFNAKQLPTPMMNIINGGSHADNNVDFQEFMILPVGAPTFKESIRMGAEVFHALKAVLHDKGLNTAVGDEGGFAPNLGSNREALEVIIEAIEKAGYKAGENVFLGMDVASSEFYNKETGKYDLAGEGRTGLTSAEMVDFYEELCKDFPIISIEDGLDENDWDGHKLLTERIGDKVQLVGDDLFVTNTQKLAEGIEKGISNSILIKVNQIGTLTETFEAIEMAKRAGYTAVVSHRSGETEDATIADIAVATNAGQIKTGSMSRTDRIAKYNQLLRIEDELGEIAVYDGIKSFYNIKR.

Residue Gln163 coordinates (2R)-2-phosphoglycerate. The active-site Proton donor is the Glu205. Mg(2+) contacts are provided by Asp242, Glu288, and Asp315. Positions 340, 369, 370, and 391 each coordinate (2R)-2-phosphoglycerate. The Proton acceptor role is filled by Lys340.

This sequence belongs to the enolase family. Requires Mg(2+) as cofactor.

The protein localises to the cytoplasm. It localises to the secreted. Its subcellular location is the cell surface. It carries out the reaction (2R)-2-phosphoglycerate = phosphoenolpyruvate + H2O. It functions in the pathway carbohydrate degradation; glycolysis; pyruvate from D-glyceraldehyde 3-phosphate: step 4/5. In terms of biological role, catalyzes the reversible conversion of 2-phosphoglycerate (2-PG) into phosphoenolpyruvate (PEP). It is essential for the degradation of carbohydrates via glycolysis. In Bacillus cereus (strain G9842), this protein is Enolase.